Consider the following 27-residue polypeptide: Fructokinase (27 aa).

The protein belongs to the ROK (NagC/XylR) family. Homodimer. Mg(2+) is required as a cofactor.

The enzyme catalyses D-fructose + ATP = D-fructose 6-phosphate + ADP + H(+). With respect to regulation, inhibition by zinc ions. This Fusobacterium mortiferum protein is Fructokinase.